A 178-amino-acid chain; its full sequence is Fatty-acid and retinol-binding protein 1 (178 aa).

Positions 1 to 16 are cleaved as a signal peptide; it reads MYHQLILMALIGVIMA. 2 N-linked (GlcNAc...) asparagine glycosylation sites follow: Asn-44 and Asn-75. Coiled-coil stretches lie at residues 67–89 and 122–154; these read DAAL…ELRN and QKLD…LKAT. A glycan (N-linked (GlcNAc...) asparagine) is linked at Asn-157.

It belongs to the fatty-acid and retinol-binding protein (FARBP) family. Post-translationally, N-glycosylated.

The protein resides in the secreted. Binds retinol and different fatty acids. The sequence is that of Fatty-acid and retinol-binding protein 1 from Onchocerca dukei (Filarial nematode worm).